We begin with the raw amino-acid sequence, 766 residues long: NADH-dependent flavin oxidoreductase iliE (766 aa).

A compositionally biased stretch (polar residues) spans 1 to 13; the sequence is MSEQLGSHITTPS. The disordered stretch occupies residues 1–24; that stretch reads MSEQLGSHITTPSSHDDASKDKRP. The span at 14–24 shows a compositional bias: basic and acidic residues; the sequence is SHDDASKDKRP. N-linked (GlcNAc...) asparagine glycosylation is present at asparagine 30. FMN is bound at residue 61 to 64; it reads AATA. Residues asparagine 70 and asparagine 136 are each glycosylated (N-linked (GlcNAc...) asparagine). Glutamine 143 is a binding site for FMN. 224 to 227 is a substrate binding site; it reads HAGH. 385–386 contacts FMN; the sequence is AR. The J domain occupies 551–622; the sequence is TPYDILAMRK…SKRSLYDTQG (72 aa). Asparagine 634, asparagine 650, and asparagine 654 each carry an N-linked (GlcNAc...) asparagine glycan. A helical membrane pass occupies residues 675–695; it reads MYMSNGVFATLVVMMCMIGAF.

Belongs to the NADH:flavin oxidoreductase/NADH oxidase family.

The protein resides in the membrane. NADH-dependent flavin oxidoreductase; part of the gene cluster that mediates the biosynthesis of ilicicolin H, a 4-hydroxy-2-pyridonealkaloid that has potent and broad antifungal activities by inhibiting the mitochondrial respiration chain. The biosynthesis of ilicicolin H starts with formation of the tetramic acid by the hybrid PKS-NRPS synthetase iliA with the partnering trans-enoyl reductase iliB since iliA lacks a designated enoylreductase (ER) domain. The cytochrome P450 monooxygenase iliC then catalyzes the ring expansion of the tetramate to the acyclic 2-pyridone. The pericyclase iliD further converts the acyclic 2-pyridone into 8-epi-ilicicolin H. 8-epi-ilicicolin H might then spontaneously convert to ilicicolin H since ilicicolin H is produced in the absence of the epimerase iliE, in contrast to what was observed for the Talaromyces variabilis ilicolin H biosynthetic pathway. The chain is NADH-dependent flavin oxidoreductase iliE from Neonectria sp. (strain DH2).